The primary structure comprises 526 residues: Putative UDP-glucuronosyltransferase ugt-48 (526 aa).

The N-terminal stretch at 1-17 (MLLRILTFLAVCQVTTS) is a signal peptide. Asparagine 58 and asparagine 305 each carry an N-linked (GlcNAc...) asparagine glycan. Residues 489–509 (FYNLDIIITAASIPVLIFIVL) form a helical membrane-spanning segment. Residue asparagine 513 is glycosylated (N-linked (GlcNAc...) asparagine).

Belongs to the UDP-glycosyltransferase family. In terms of assembly, interacts with cmd-1 in the presence of Ca(2+).

Its subcellular location is the membrane. The catalysed reaction is glucuronate acceptor + UDP-alpha-D-glucuronate = acceptor beta-D-glucuronoside + UDP + H(+). This is Putative UDP-glucuronosyltransferase ugt-48 (ugt-48) from Caenorhabditis elegans.